The following is a 491-amino-acid chain: Inositol-pentakisphosphate 2-kinase (491 aa).

The EXKPK motif signature appears at 136 to 140; the sequence is EIKPK. Serine 282 is modified (phosphoserine).

Belongs to the IPK1 type 2 family. In terms of tissue distribution, ubiquitously expressed, with high expression in heart, brain, testis and placenta.

Its subcellular location is the cytoplasm. The protein resides in the nucleus. It catalyses the reaction 1D-myo-inositol 1,3,4,5,6-pentakisphosphate + ATP = 1D-myo-inositol hexakisphosphate + ADP + H(+). Functionally, phosphorylates Ins(1,3,4,5,6)P5 at position 2 to form Ins(1,2,3,4,5,6)P6 (InsP6 or phytate). InsP6 is involved in many processes such as mRNA export, non-homologous end-joining, endocytosis, ion channel regulation. It also protects cells from TNF-alpha-induced apoptosis. This chain is Inositol-pentakisphosphate 2-kinase (IPPK), found in Homo sapiens (Human).